A 453-amino-acid polypeptide reads, in one-letter code: Pup--protein ligase (453 aa).

Glutamate 9 contacts Mg(2+). Arginine 53 serves as a coordination point for ATP. Tyrosine 55 lines the Mg(2+) pocket. Residue aspartate 57 is the Proton acceptor of the active site. Residue glutamate 63 coordinates Mg(2+). Residues threonine 66 and tryptophan 420 each coordinate ATP.

It belongs to the Pup ligase/Pup deamidase family. Pup-conjugating enzyme subfamily.

The enzyme catalyses ATP + [prokaryotic ubiquitin-like protein]-L-glutamate + [protein]-L-lysine = ADP + phosphate + N(6)-([prokaryotic ubiquitin-like protein]-gamma-L-glutamyl)-[protein]-L-lysine.. It participates in protein degradation; proteasomal Pup-dependent pathway. It functions in the pathway protein modification; protein pupylation. Its function is as follows. Catalyzes the covalent attachment of the prokaryotic ubiquitin-like protein modifier Pup to the proteasomal substrate proteins, thereby targeting them for proteasomal degradation. This tagging system is termed pupylation. The ligation reaction involves the side-chain carboxylate of the C-terminal glutamate of Pup and the side-chain amino group of a substrate lysine. The chain is Pup--protein ligase from Streptomyces avermitilis (strain ATCC 31267 / DSM 46492 / JCM 5070 / NBRC 14893 / NCIMB 12804 / NRRL 8165 / MA-4680).